The sequence spans 342 residues: Ribosomal RNA small subunit methyltransferase C (342 aa).

This sequence belongs to the methyltransferase superfamily. RsmC family. As to quaternary structure, monomer.

The protein resides in the cytoplasm. The catalysed reaction is guanosine(1207) in 16S rRNA + S-adenosyl-L-methionine = N(2)-methylguanosine(1207) in 16S rRNA + S-adenosyl-L-homocysteine + H(+). Its function is as follows. Specifically methylates the guanine in position 1207 of 16S rRNA in the 30S particle. This chain is Ribosomal RNA small subunit methyltransferase C, found in Shewanella piezotolerans (strain WP3 / JCM 13877).